Consider the following 162-residue polypeptide: Small ribosomal subunit protein uS9 (162 aa).

The protein belongs to the universal ribosomal protein uS9 family.

This is Small ribosomal subunit protein uS9 from Methylobacterium sp. (strain 4-46).